The chain runs to 157 residues: Transcription elongation factor GreA (157 aa).

Positions 14–37 (LREELDRLLKLRPKITEAIAEARE) form a coiled coil.

Belongs to the GreA/GreB family.

In terms of biological role, necessary for efficient RNA polymerase transcription elongation past template-encoded arresting sites. The arresting sites in DNA have the property of trapping a certain fraction of elongating RNA polymerases that pass through, resulting in locked ternary complexes. Cleavage of the nascent transcript by cleavage factors such as GreA or GreB allows the resumption of elongation from the new 3'terminus. GreA releases sequences of 2 to 3 nucleotides. This is Transcription elongation factor GreA from Vibrio cholerae serotype O1 (strain ATCC 39315 / El Tor Inaba N16961).